A 1024-amino-acid chain; its full sequence is Error-prone DNA polymerase (1024 aa).

This sequence belongs to the DNA polymerase type-C family. DnaE2 subfamily.

The protein localises to the cytoplasm. The catalysed reaction is DNA(n) + a 2'-deoxyribonucleoside 5'-triphosphate = DNA(n+1) + diphosphate. Functionally, DNA polymerase involved in damage-induced mutagenesis and translesion synthesis (TLS). It is not the major replicative DNA polymerase. This chain is Error-prone DNA polymerase, found in Vibrio vulnificus (strain CMCP6).